A 256-amino-acid polypeptide reads, in one-letter code: Hemin import ATP-binding protein HmuV (256 aa).

The ABC transporter domain maps to 2–239; sequence IHAFAVSVIR…ANVREVYQVD (238 aa). 34 to 41 lines the ATP pocket; sequence GPNGAGKS.

Belongs to the ABC transporter superfamily. Heme (hemin) importer (TC 3.A.1.14.5) family. The complex is composed of two ATP-binding proteins (HmuV), two transmembrane proteins (HmuU) and a solute-binding protein (HmuT).

The protein resides in the cell inner membrane. Its function is as follows. Part of the ABC transporter complex HmuTUV involved in hemin import. Responsible for energy coupling to the transport system. This chain is Hemin import ATP-binding protein HmuV, found in Hahella chejuensis (strain KCTC 2396).